The primary structure comprises 329 residues: Tyrosine--tRNA ligase (329 aa).

Y31, Y157, Q161, D164, and Q179 together coordinate L-tyrosine. A 'KMSKS' region motif is present at residues 220-224; it reads KMSKS. K223 provides a ligand contact to ATP.

Belongs to the class-I aminoacyl-tRNA synthetase family. TyrS type 4 subfamily. In terms of assembly, homodimer.

It is found in the cytoplasm. It carries out the reaction tRNA(Tyr) + L-tyrosine + ATP = L-tyrosyl-tRNA(Tyr) + AMP + diphosphate + H(+). Functionally, catalyzes the attachment of tyrosine to tRNA(Tyr) in a two-step reaction: tyrosine is first activated by ATP to form Tyr-AMP and then transferred to the acceptor end of tRNA(Tyr). The chain is Tyrosine--tRNA ligase from Picrophilus torridus (strain ATCC 700027 / DSM 9790 / JCM 10055 / NBRC 100828 / KAW 2/3).